Consider the following 449-residue polypeptide: MREIISLNVGQAGCQIANSCWELYCLEHGIQPDGYLTEERKAADPDHGFSTFFSETGNGKYVPRTIYADLEPNVIDEVRTGAYRGLFHPEHMISGKEDASNNYARGHYTVGKELIDQVLDKVRRVADNCSGLQGFLVFHSFGGGTGSGFGALLMERLSVDYGKKSKLEFCVYPAPQTATSVVEPYNSILTTHTTLEHADCSFMVDNEAIYDICRRNLGLERPNYENLNRLIAQVVSSITASLRFDGSLNVDLNEFQTNLVPYPRIHFPLVAYAPVISAAKAAHEANSVQEMTMSCFEPNNQMVKCDPRHGKYMATCLLYRGDVVPNDAHAAVATLKTKRTIQFVDWCPTGFKLGICYQPPHQVPNGDLAKVNRAVCMLSNTTAIAEAWSALSSKFDLMYSKRAFVHWYVGEGMEEGEFSEAREDLAALERDYEEVAADSMEGEDVEAEY.

Positions 11, 71, 140, 144, 145, 179, 206, and 228 each coordinate GTP. E71 contributes to the Mg(2+) binding site. E254 is a catalytic residue.

The protein belongs to the tubulin family. As to quaternary structure, dimer of alpha and beta chains. A typical microtubule is a hollow water-filled tube with an outer diameter of 25 nm and an inner diameter of 15 nM. Alpha-beta heterodimers associate head-to-tail to form protofilaments running lengthwise along the microtubule wall with the beta-tubulin subunit facing the microtubule plus end conferring a structural polarity. Microtubules usually have 13 protofilaments but different protofilament numbers can be found in some organisms and specialized cells. The cofactor is Mg(2+).

The protein resides in the cytoplasm. The protein localises to the cytoskeleton. It catalyses the reaction GTP + H2O = GDP + phosphate + H(+). Functionally, tubulin is the major constituent of microtubules, a cylinder consisting of laterally associated linear protofilaments composed of alpha- and beta-tubulin heterodimers. Microtubules grow by the addition of GTP-tubulin dimers to the microtubule end, where a stabilizing cap forms. Below the cap, tubulin dimers are in GDP-bound state, owing to GTPase activity of alpha-tubulin. The polypeptide is Tubulin alpha-B chain (tba-2) (Neurospora crassa (strain ATCC 24698 / 74-OR23-1A / CBS 708.71 / DSM 1257 / FGSC 987)).